A 408-amino-acid polypeptide reads, in one-letter code: 3-phosphoshikimate 1-carboxyvinyltransferase (408 aa).

3-phosphoshikimate is bound by residues Lys-20, Ser-21, and Arg-25. Lys-20 contacts phosphoenolpyruvate. Residue Arg-111 coordinates phosphoenolpyruvate. Ser-151, Ser-152, Gln-153, Ser-178, Asp-293, and Lys-320 together coordinate 3-phosphoshikimate. Residue Gln-153 coordinates phosphoenolpyruvate. The Proton acceptor role is filled by Asp-293. The phosphoenolpyruvate site is built by Arg-324, Arg-365, and Lys-389.

This sequence belongs to the EPSP synthase family. In terms of assembly, monomer.

It localises to the cytoplasm. It carries out the reaction 3-phosphoshikimate + phosphoenolpyruvate = 5-O-(1-carboxyvinyl)-3-phosphoshikimate + phosphate. The protein operates within metabolic intermediate biosynthesis; chorismate biosynthesis. Its function is as follows. Catalyzes the transfer of the enolpyruvyl moiety of phosphoenolpyruvate (PEP) to the 5-hydroxyl of shikimate-3-phosphate (S3P) to produce enolpyruvyl shikimate-3-phosphate and inorganic phosphate. The protein is 3-phosphoshikimate 1-carboxyvinyltransferase of Sulfurisphaera tokodaii (strain DSM 16993 / JCM 10545 / NBRC 100140 / 7) (Sulfolobus tokodaii).